Reading from the N-terminus, the 143-residue chain is Transcription antitermination protein NusB (143 aa).

It belongs to the NusB family.

In terms of biological role, involved in transcription antitermination. Required for transcription of ribosomal RNA (rRNA) genes. Binds specifically to the boxA antiterminator sequence of the ribosomal RNA (rrn) operons. In Clostridium botulinum (strain Kyoto / Type A2), this protein is Transcription antitermination protein NusB.